A 226-amino-acid polypeptide reads, in one-letter code: MPQAALRLDKVTRSFSQGREVLNVLTGADLAVNPGEIVALVGPSGAGKSTLLQICGLLEKPTAGEVRIGGISCGQLSEDRRTLLRRDHLGFVYQYHHLLPEFSAAENIVVPQMIAGIGRKPALARAAELLAKMGLSERQDHRPGQLSGGEQQRVAICRALANRPKLLLADEPTGNLDPNTAERVFQALLDLVRGEGLAALIATHNPDLARRMDRIVTLREGKVVAA.

The region spanning L6–A226 is the ABC transporter domain. Residue G42–S49 coordinates ATP.

It belongs to the ABC transporter superfamily. Lipoprotein translocase (TC 3.A.1.125) family. The complex is composed of two ATP-binding proteins (LolD) and two transmembrane proteins (LolC and LolE).

It is found in the cell inner membrane. Part of the ABC transporter complex LolCDE involved in the translocation of mature outer membrane-directed lipoproteins, from the inner membrane to the periplasmic chaperone, LolA. Responsible for the formation of the LolA-lipoprotein complex in an ATP-dependent manner. The sequence is that of Lipoprotein-releasing system ATP-binding protein LolD 1 from Rhodospirillum rubrum (strain ATCC 11170 / ATH 1.1.1 / DSM 467 / LMG 4362 / NCIMB 8255 / S1).